Consider the following 330-residue polypeptide: Poly(3-hydroxyalkanoate) polymerase subunit PhaE (330 aa).

The stretch at 298–328 forms a coiled coil; sequence RSEVDEIHQTIYQLRKEVKSLKKRLGETEAN.

The protein belongs to the PHA/PHB synthase family. Type III PhaE subfamily. As to quaternary structure, forms a heterodimer with PhaC, which may multimerize in the presence of 3-hydroxybutyryl-CoA. Both subunits are required for PHB synthesis in E.coli and in PHA-negative A.eutrophus.

It is found in the cytoplasm. It functions in the pathway biopolymer metabolism; poly-(R)-3-hydroxybutanoate biosynthesis. In terms of biological role, when expressed in E.coli with Synechocystis PhaC and C.necator PhaA and PhaB, confers the ability to synthesize up to 13% (w/w) poly(3-hydroxybutyrate) (PHB) depending on the carbon source; all 4 genes are necessary for PHB production. Cell-free in vitro coexpression with PhaE gives a heterodimer able to polymerize 3-hydroxybutyrate-CoA. This subunit has no catalytic activity but enhances the activity of PhaC, the catalytic subunit. This Synechocystis sp. (strain ATCC 27184 / PCC 6803 / Kazusa) protein is Poly(3-hydroxyalkanoate) polymerase subunit PhaE.